The sequence spans 782 residues: Potassium transporter 6 (782 aa).

Residues 1-18 (MEIESGSYQNAKKESWRT) lie on the Cytoplasmic side of the membrane. Residues 19 to 39 (VLTLAYQSLGVVYGDLSISPL) form a helical membrane-spanning segment. The Extracellular segment spans residues 40 to 61 (YVYKSTFAEDIHHSESNEEIFG). The helical transmembrane segment at 62–82 (VLSFIFWTITLVPLLKYVFIV) threads the bilayer. Over 83 to 153 (LRADDNGEGG…TLEKHGVLQK (71 aa)) the chain is Cytoplasmic. A helical transmembrane segment spans residues 154–174 (ILLVLALIGTCMVIGDGVLTP). The Extracellular segment spans residues 175-195 (AISVFSAVSGVELSMSKEHHK). Residues 196–216 (YIELPAACVILIGLFALQHYG) traverse the membrane as a helical segment. The Cytoplasmic segment spans residues 217 to 219 (THR). Residues 220–240 (VGFLFAPVILLWLMCISAIGV) form a helical membrane-spanning segment. The Extracellular portion of the chain corresponds to 241–270 (YNIFHWNPHVYQALSPYYMYKFLKKTQSRG). Residues 271 to 291 (WMSLGGILLCITGSEAMFADL) form a helical membrane-spanning segment. Over 292 to 296 (GHFSQ) the chain is Cytoplasmic. The helical transmembrane segment at 297–317 (LSIKIAFTSLVYPSLILAYMG) threads the bilayer. The Extracellular portion of the chain corresponds to 318–347 (QAAYLSQHHIIESEYNIGFYVSVPERLRWP). Residues 348–368 (VLVIAILAAVVGSQAIITGTF) form a helical membrane-spanning segment. Topologically, residues 369 to 395 (SIIKQCSALGCFPKVKIVHTSSKIHGQ) are cytoplasmic. Residues 396-416 (IYIPEINWILMVLCLAVTIGF) form a helical membrane-spanning segment. At 417–421 (RDTKR) the chain is on the extracellular side. 2 consecutive transmembrane segments (helical) span residues 422-442 (LGNA…CLMS) and 443-463 (LVIV…VVFF). Residues 464–474 (GTIESLYFSAS) are Extracellular-facing. Residues 475 to 495 (LIKFLEGAWVPIALAFCFLLA) form a helical membrane-spanning segment. Topologically, residues 496–782 (MCTWHYGTLK…TLEVGMIYNV (287 aa)) are cytoplasmic. Over residues 664–675 (YESDIDDPDKPG) the composition is skewed to basic and acidic residues. Residues 664-693 (YESDIDDPDKPGTSEIRSPKPKKKSKSKVK) form a disordered region. Positions 682-693 (PKPKKKSKSKVK) are enriched in basic residues.

The protein belongs to the HAK/KUP transporter (TC 2.A.72.3) family.

Its subcellular location is the cell membrane. Probable potassium transporter. The sequence is that of Potassium transporter 6 (POT6) from Arabidopsis thaliana (Mouse-ear cress).